Here is a 213-residue protein sequence, read N- to C-terminus: Probable GTP-binding protein EngB (213 aa).

In terms of domain architecture, EngB-type G spans 25–203 (EGTEVAFAGR…EDVLNGWLLP (179 aa)). GTP contacts are provided by residues 33 to 40 (GRSNAGKS), 60 to 64 (GRTQL), 80 to 83 (DLPG), 147 to 150 (TKAD), and 179 to 184 (AQMFSA). The Mg(2+) site is built by Ser40 and Thr62.

It belongs to the TRAFAC class TrmE-Era-EngA-EngB-Septin-like GTPase superfamily. EngB GTPase family. Mg(2+) is required as a cofactor.

Its function is as follows. Necessary for normal cell division and for the maintenance of normal septation. The protein is Probable GTP-binding protein EngB of Saccharophagus degradans (strain 2-40 / ATCC 43961 / DSM 17024).